Here is a 352-residue protein sequence, read N- to C-terminus: 4-hydroxy-2-oxovalerate aldolase 4 (352 aa).

In terms of domain architecture, Pyruvate carboxyltransferase spans 9-261 (IRVTDSSLRD…RTGIDTLKII (253 aa)). 17-18 (RD) contributes to the substrate binding site. D18 contacts Mn(2+). Catalysis depends on H21, which acts as the Proton acceptor. Substrate contacts are provided by S171 and H200. 2 residues coordinate Mn(2+): H200 and H202. Position 291 (Y291) interacts with substrate.

The protein belongs to the 4-hydroxy-2-oxovalerate aldolase family.

It catalyses the reaction (S)-4-hydroxy-2-oxopentanoate = acetaldehyde + pyruvate. The sequence is that of 4-hydroxy-2-oxovalerate aldolase 4 from Rhodococcus jostii (strain RHA1).